The primary structure comprises 259 residues: Phosphatidylglycerol--prolipoprotein diacylglyceryl transferase (259 aa).

4 consecutive transmembrane segments (helical) span residues 12-32 (LSLHWYAVCILVGLLLAVYLA), 46-66 (IIDFILIAFPLAIIGARIYYV), 83-103 (IWNGGIAIYGGLITGTIVLFV), and 109-129 (VLNPIHFLDIAAPSVMLAQAI). Arginine 131 serves as a coordination point for a 1,2-diacyl-sn-glycero-3-phospho-(1'-sn-glycerol). The next 3 helical transmembrane spans lie at 167–187 (VPTFLYESMWNLIGFVIIMVW), 194–214 (LVDGDIISFYLIWYGCGRLVI), and 226–246 (GIRVSQYMSVLLIIIAIVFIF).

It belongs to the Lgt family.

Its subcellular location is the cell membrane. The catalysed reaction is L-cysteinyl-[prolipoprotein] + a 1,2-diacyl-sn-glycero-3-phospho-(1'-sn-glycerol) = an S-1,2-diacyl-sn-glyceryl-L-cysteinyl-[prolipoprotein] + sn-glycerol 1-phosphate + H(+). Its pathway is protein modification; lipoprotein biosynthesis (diacylglyceryl transfer). In terms of biological role, catalyzes the transfer of the diacylglyceryl group from phosphatidylglycerol to the sulfhydryl group of the N-terminal cysteine of a prolipoprotein, the first step in the formation of mature lipoproteins. This Streptococcus equi subsp. equi (strain 4047) protein is Phosphatidylglycerol--prolipoprotein diacylglyceryl transferase.